The sequence spans 388 residues: MRYLTAGESHGLSLTAIIEGIPAGLTLHPADIDHELQRRQGGYGRGARMSIETDRVQISSGVRHGKTTGAPITLTVINKDHQKWLDVMAVGDIEETLKLKRRVKHPRPGHADLVGGIKYHFNDLRDALERSSARETTMRVAVGAVAKRILAELGIDMLHHILIFGGITITIPSKLSFRELQERALHSELSIVNPKQEEEIKTYIDKIKKEGDTIGGIIETIVQGVPAGLGSYVQWDKKLDAKLAQAVLSINAFKGVEFGVGFDMGFQKGSQVMDEITWTPTQGYGRQTNHLGGFEGGMTTGQPLVVKGVMKPIPTLYKPLMSVDIDSHEPYKATVERSDPTALPAAGVIMENVVATVLAKEILETFSSTTMSELQKAFSDYRAYVKQF.

NADP(+)-binding residues include R39 and R45. FMN-binding positions include 130–132 (RSS), 251–252 (NA), G296, 311–315 (KPIPT), and R337.

It belongs to the chorismate synthase family. In terms of assembly, homotetramer. FMNH2 is required as a cofactor.

It catalyses the reaction 5-O-(1-carboxyvinyl)-3-phosphoshikimate = chorismate + phosphate. Its pathway is metabolic intermediate biosynthesis; chorismate biosynthesis; chorismate from D-erythrose 4-phosphate and phosphoenolpyruvate: step 7/7. In terms of biological role, catalyzes the anti-1,4-elimination of the C-3 phosphate and the C-6 proR hydrogen from 5-enolpyruvylshikimate-3-phosphate (EPSP) to yield chorismate, which is the branch point compound that serves as the starting substrate for the three terminal pathways of aromatic amino acid biosynthesis. This reaction introduces a second double bond into the aromatic ring system. In Streptococcus pyogenes serotype M6 (strain ATCC BAA-946 / MGAS10394), this protein is Chorismate synthase.